Reading from the N-terminus, the 177-residue chain is Endothelin-2 (177 aa).

Residues 1–23 form the signal peptide; that stretch reads MPTALCSIALALLVALHEGKSQA. A propeptide spanning residues 24–45 is cleaved from the precursor; that stretch reads ATTPIPEQPAPLPRARGSHLRT. 2 cysteine pairs are disulfide-bonded: C48–C62 and C50–C58. Positions 69-177 are excised as a propeptide; sequence VNTPGQTAPY…RPTHSRQRKR (109 aa). Residues 95 to 110 form an endothelin-like region; sequence CECYSARDPACATFCH. The disordered stretch occupies residues 155-177; sequence HFARQQQKPTRETRPTHSRQRKR.

The protein belongs to the endothelin/sarafotoxin family. As to expression, expressed in various organs including heart, lung, liver, kidney, gastrointestinal tract, uterus and ovary, but not in spleen. Within the gastrointestinal tract, gene expression was detected in rumen, a ruminant-specific digestive organ, as well as stomach, duodenum and colon.

Its subcellular location is the secreted. In terms of biological role, endothelins are endothelium-derived vasoconstrictor peptides. The protein is Endothelin-2 (EDN2) of Bos taurus (Bovine).